Reading from the N-terminus, the 465-residue chain is Argininosuccinate lyase (465 aa).

It belongs to the lyase 1 family. Argininosuccinate lyase subfamily.

It is found in the cytoplasm. The catalysed reaction is 2-(N(omega)-L-arginino)succinate = fumarate + L-arginine. Its pathway is amino-acid biosynthesis; L-arginine biosynthesis; L-arginine from L-ornithine and carbamoyl phosphate: step 3/3. The polypeptide is Argininosuccinate lyase (Aromatoleum aromaticum (strain DSM 19018 / LMG 30748 / EbN1) (Azoarcus sp. (strain EbN1))).